We begin with the raw amino-acid sequence, 71 residues long: Long neurotoxin 1 (71 aa).

5 disulfides stabilise this stretch: Cys3–Cys20, Cys14–Cys41, Cys26–Cys30, Cys45–Cys56, and Cys57–Cys62.

It belongs to the three-finger toxin family. Long-chain subfamily. Type II alpha-neurotoxin sub-subfamily. Expressed by the venom gland.

The protein localises to the secreted. In terms of biological role, binds with high affinity to muscular (alpha-1/CHRNA1) and neuronal (alpha-7/CHRNA7) nicotinic acetylcholine receptor (nAChR) and inhibits acetylcholine from binding to the receptor, thereby impairing neuromuscular and neuronal transmission. The chain is Long neurotoxin 1 from Naja naja (Indian cobra).